Reading from the N-terminus, the 68-residue chain is uncharacterized protein (68 aa).

This is an uncharacterized protein from Homo sapiens (Human).